The chain runs to 560 residues: Excitatory amino acid transporter 5 (560 aa).

At 1 to 16 (MVPHAILARGRDVCRR) the chain is on the cytoplasmic side. The next 3 helical transmembrane spans lie at 17 to 37 (NGLL…GFFL), 60 to 80 (MLKM…LASL), and 94 to 114 (AYYL…VSII). Residues 115-216 (HPGSAAQKET…EVVYKSEPGT (102 aa)) are Extracellular-facing. Residue asparagine 191 is glycosylated (N-linked (GlcNAc...) asparagine). Transmembrane regions (helical) follow at residues 217-237 (SDGM…IMLG), 260-280 (IVAV…AGKI), 300-320 (VVCG…FFIT), 330-350 (GILQ…TLPI), 372-392 (VGAT…AIFI), 414-434 (AASI…VIVL), and 457-477 (FRTM…AHIC).

It belongs to the dicarboxylate/amino acid:cation symporter (DAACS) (TC 2.A.23) family. SLC1A7 subfamily. Interacts with the PDZ domains of DLG4. Expressed primarily in retina. Detectable in liver, heart, muscle and brain.

It localises to the photoreceptor inner segment membrane. It is found in the synaptic cell membrane. The catalysed reaction is K(+)(in) + L-glutamate(out) + 3 Na(+)(out) + H(+)(out) = K(+)(out) + L-glutamate(in) + 3 Na(+)(in) + H(+)(in). It carries out the reaction K(+)(in) + L-aspartate(out) + 3 Na(+)(out) + H(+)(out) = K(+)(out) + L-aspartate(in) + 3 Na(+)(in) + H(+)(in). The enzyme catalyses D-aspartate(out) + K(+)(in) + 3 Na(+)(out) + H(+)(out) = D-aspartate(in) + K(+)(out) + 3 Na(+)(in) + H(+)(in). Functionally, sodium-dependent, high-affinity amino acid transporter that mediates the uptake of L-glutamate and also L-aspartate and D-aspartate. Functions as a symporter that transports one amino acid molecule together with two or three Na(+) ions and one proton, in parallel with the counter-transport of one K(+) ion. Acts primarily as an inhibitory glutamate-gated chloride channel being a major inhibitory presynaptic receptor at mammalian rod bipolar cell axon terminals. Glutamate binding gates a large Cl(-) conductance that mediates inhibition, affecting visual processing in the retina. This chain is Excitatory amino acid transporter 5, found in Homo sapiens (Human).